Reading from the N-terminus, the 1539-residue chain is Lysine-specific demethylase 5D (1539 aa).

Residues Cys-14 to Pro-55 form the JmjN domain. The ARID domain occupies Thr-79–Ser-169. The segment at Pro-192–Glu-228 is disordered. The segment covering Leu-197–Ser-210 has biased composition (polar residues). Glycyl lysine isopeptide (Lys-Gly) (interchain with G-Cter in SUMO2) cross-links involve residues Lys-205, Lys-229, Lys-244, and Lys-272. 2 positions are modified to phosphoserine: Ser-291 and Ser-307. The PHD-type 1 zinc finger occupies Ile-316–Ile-362. A 2-oxoglutarate-binding site is contributed by Tyr-430. The region spanning Glu-458 to Arg-624 is the JmjC domain. Residues His-504 and Glu-506 each contribute to the Fe cation site. Ser-512, Asn-514, and Lys-522 together coordinate 2-oxoglutarate. Residue His-592 participates in Fe cation binding. The C5HC2 zinc-finger motif lies at Cys-697–Met-749. Ser-884 carries the phosphoserine modification. The PHD-type 2 zinc finger occupies Ile-1174–Met-1235. Ser-1346 is subject to Phosphoserine. Positions His-1429–Ala-1521 are disordered. A compositionally biased stretch (basic residues) spans Ser-1432–Gln-1446. Residues Gly-1477–Asn-1491 show a composition bias toward basic and acidic residues. The span at Leu-1494–Ala-1521 shows a compositional bias: polar residues.

It belongs to the JARID1 histone demethylase family. In terms of assembly, interacts with PCGF6, MSH5, ZMYND8, AR. It depends on L-ascorbate as a cofactor. Requires Fe(2+) as cofactor. In terms of tissue distribution, expression is highly down-regulated in metastatic prostate tumors.

It is found in the nucleus. The catalysed reaction is N(6),N(6),N(6)-trimethyl-L-lysyl(4)-[histone H3] + 3 2-oxoglutarate + 3 O2 = L-lysyl(4)-[histone H3] + 3 formaldehyde + 3 succinate + 3 CO2. Histone demethylase that specifically demethylates 'Lys-4' of histone H3, thereby playing a central role in histone code. Does not demethylate histone H3 'Lys-9', H3 'Lys-27', H3 'Lys-36', H3 'Lys-79' or H4 'Lys-20'. Demethylates trimethylated and dimethylated but not monomethylated H3 'Lys-4'. May play a role in spermatogenesis. Involved in transcriptional repression of diverse metastasis-associated genes; in this function seems to cooperate with ZMYND8. Suppresses prostate cancer cell invasion. Regulates androgen receptor (AR) transcriptional activity by demethylating H3K4me3 active transcription marks. The polypeptide is Lysine-specific demethylase 5D (KDM5D) (Homo sapiens (Human)).